The chain runs to 296 residues: Nucleotide-binding protein SPJ_1472 (296 aa).

Residue 13–20 (GMSGAGKT) participates in ATP binding. 63-66 (DMRS) contributes to the GTP binding site.

It belongs to the RapZ-like family.

In terms of biological role, displays ATPase and GTPase activities. This Streptococcus pneumoniae (strain JJA) protein is Nucleotide-binding protein SPJ_1472.